We begin with the raw amino-acid sequence, 59 residues long: Large ribosomal subunit protein uL30 (59 aa).

Belongs to the universal ribosomal protein uL30 family. In terms of assembly, part of the 50S ribosomal subunit.

This Citrifermentans bemidjiense (strain ATCC BAA-1014 / DSM 16622 / JCM 12645 / Bem) (Geobacter bemidjiensis) protein is Large ribosomal subunit protein uL30.